The following is a 112-amino-acid chain: cAMP-regulated phosphoprotein 19 (112 aa).

Over residues 1-11 (MSAESPEPASA) the composition is skewed to low complexity. The segment at 1-48 (MSAESPEPASAEEQKEMEDKVISPEKAEEAKLKARYPHLGQKPGGSDF) is disordered. Serine 2 bears the N-acetylserine mark. Positions 12-32 (EEQKEMEDKVISPEKAEEAKL) are enriched in basic and acidic residues. A phosphoserine; by GWL mark is found at serine 62 and serine 104. The disordered stretch occupies residues 73-112 (KNKQLPTAAPDKTEVTGDHIPTPQDLPQRKPSLVASKLAG). Serine 104 bears the Phosphoserine; by PKA mark.

The protein belongs to the endosulfine family. As to quaternary structure, interacts (when phosphorylated at Ser-62) with PPP2R2D. Post-translationally, phosphorylation at Ser-62 by MASTL/GWL during mitosis is essential for interaction with PPP2R2D (PR55-delta) and subsequent inactivation of PP2A.

The protein resides in the cytoplasm. Its function is as follows. Protein phosphatase inhibitor that specifically inhibits protein phosphatase 2A (PP2A) during mitosis. Inhibition of PP2A is enhanced when ARPP19 is phosphorylated. When phosphorylated at Ser-62 during mitosis, specifically interacts with PPP2R2D (PR55-delta) and inhibits its activity, leading to inactivation of PP2A, an essential condition to keep cyclin-B1-CDK1 activity high during M phase. This is cAMP-regulated phosphoprotein 19 (ARPP19) from Gallus gallus (Chicken).